Consider the following 642-residue polypeptide: DNA primase (642 aa).

The CHC2-type zinc-finger motif lies at 41–65; sequence CPFHNEKSPSFHVRPNHGHFHCFGC. The Toprim domain maps to 262-348; that stretch reads HQAVVVEGYT…AGKSFVAVAA (87 aa). Positions 268, 319, and 321 each coordinate Mg(2+). The segment at 445 to 480 is disordered; the sequence is NRRSVPERTRRRSVSVEQSPFMQPPGAPADQLAARP.

This sequence belongs to the DnaG primase family. In terms of assembly, monomer. Interacts with DnaB. Zn(2+) is required as a cofactor. It depends on Mg(2+) as a cofactor.

It carries out the reaction ssDNA + n NTP = ssDNA/pppN(pN)n-1 hybrid + (n-1) diphosphate.. Its function is as follows. RNA polymerase that catalyzes the synthesis of short RNA molecules used as primers for DNA polymerase during DNA replication. In Mycobacterium leprae (strain TN), this protein is DNA primase.